The following is a 665-amino-acid chain: ELMO family protein LMO1 (665 aa).

As to quaternary structure, forms an active heterodimer with DCK1.

The protein resides in the cytoplasm. Its subcellular location is the mitochondrion. Its function is as follows. Forms a transiant heterodimeric complex with DCK1, that acts as a guanine nucleotide exchange factor (GEF) for the small GTPase RHO5. DCK1, LMO1 and RHO5 relocate to mitochondria upon oxidative stress and trigger cell death. The DCK1/LMO1/RHO5 signaling module mediates mitochondrial turnover under nitrogen starvation conditions via mitophagy. The DCK1/LMO1/RHO5 signaling module also plays a role in cell wall integrity signaling. This Saccharomyces cerevisiae (strain ATCC 204508 / S288c) (Baker's yeast) protein is ELMO family protein LMO1.